The primary structure comprises 599 residues: Beta-(1--&gt;2)glucan export ATP-binding/permease protein NdvA (599 aa).

Positions Thr-21–Thr-301 constitute an ABC transmembrane type-1 domain. A run of 5 helical transmembrane segments spans residues Ile-22–Phe-42, Ile-55–Phe-75, Met-156–Val-176, Met-248–Gly-268, and Ile-276–Ile-296. Positions Ile-335–Ala-569 constitute an ABC transporter domain. Gly-368 to Thr-375 lines the ATP pocket.

It belongs to the ABC transporter superfamily. Beta-(1--&gt;2)glucan exporter (TC 3.A.1.108.1) family. Homodimer.

It is found in the cell inner membrane. It catalyses the reaction [(1-&gt;2)-beta-D-glucosyl](n)(in) + ATP + H2O = [(1-&gt;2)-beta-D-glucosyl](n)(out) + ADP + phosphate + H(+). Involved in beta-(1--&gt;2)glucan export. Transmembrane domains (TMD) form a pore in the inner membrane and the ATP-binding domain (NBD) is responsible for energy generation. This is Beta-(1--&gt;2)glucan export ATP-binding/permease protein NdvA from Brucella melitensis biotype 1 (strain ATCC 23456 / CCUG 17765 / NCTC 10094 / 16M).